Consider the following 129-residue polypeptide: Glycine cleavage system H protein 2 (129 aa).

One can recognise a Lipoyl-binding domain in the interval 24–105 (SVTVGISDHA…PYVSWFFKLK (82 aa)). Lysine 65 bears the N6-lipoyllysine mark.

It belongs to the GcvH family. The glycine cleavage system is composed of four proteins: P, T, L and H. (R)-lipoate is required as a cofactor.

Functionally, the glycine cleavage system catalyzes the degradation of glycine. The H protein shuttles the methylamine group of glycine from the P protein to the T protein. The chain is Glycine cleavage system H protein 2 from Pseudomonas aeruginosa (strain ATCC 15692 / DSM 22644 / CIP 104116 / JCM 14847 / LMG 12228 / 1C / PRS 101 / PAO1).